The sequence spans 301 residues: MKIGILSRNKKLYSTRRLIEAAEARGHEVKVVDALRCYMNINSELPEIHYRGENLKGFDAVIPRIGASVTFYGCSVLRQFEMMGVYPVNESVAISRSRDKLRSLQLLSRKGVGMPVTGFASKPDDVKDLLEMVGGAPVVIKLLEGTQGIGVVLAETRKAAESVIEAFMGLKANIMVQEYIKEAGGADIRCFVLGDKVIAAMKRQAQEGEFRSNLHRGGSATLVRITPEERKTAVAAAKAMGLNVAGVDLLRSSRGPLVMEVNSSPGLEGIEIATGKDIAGMVIDFIEKTASSKGTATRGKG.

The 184-residue stretch at Leu-104–Glu-287 folds into the ATP-grasp domain. Residues Lys-141, Glu-178 to Tyr-179, Asp-187, and Arg-211 to Asn-213 contribute to the ATP site. Positions 248, 260, and 262 each coordinate Mg(2+). Positions 248, 260, and 262 each coordinate Mn(2+).

The protein belongs to the RimK family. Mg(2+) is required as a cofactor. It depends on Mn(2+) as a cofactor.

This is Probable alpha-L-glutamate ligase from Pseudoalteromonas translucida (strain TAC 125).